The chain runs to 244 residues: tRNA1(Val) (adenine(37)-N6)-methyltransferase (244 aa).

Belongs to the methyltransferase superfamily. tRNA (adenine-N(6)-)-methyltransferase family.

Its subcellular location is the cytoplasm. It catalyses the reaction adenosine(37) in tRNA1(Val) + S-adenosyl-L-methionine = N(6)-methyladenosine(37) in tRNA1(Val) + S-adenosyl-L-homocysteine + H(+). Its function is as follows. Specifically methylates the adenine in position 37 of tRNA(1)(Val) (anticodon cmo5UAC). This chain is tRNA1(Val) (adenine(37)-N6)-methyltransferase, found in Photorhabdus laumondii subsp. laumondii (strain DSM 15139 / CIP 105565 / TT01) (Photorhabdus luminescens subsp. laumondii).